The sequence spans 425 residues: CinA-like protein (425 aa).

It belongs to the CinA family.

In Shewanella sp. (strain ANA-3), this protein is CinA-like protein.